Here is a 348-residue protein sequence, read N- to C-terminus: Actin maturation protease (348 aa).

Residues 1–18 (MISPCSPPLEPPVPPPET) show a composition bias toward pro residues. The tract at residues 1 to 64 (MISPCSPPLE…LPPPPRTTGF (64 aa)) is disordered. Over residues 34–48 (NLPELAFPPSSFQAS) the composition is skewed to low complexity. A compositionally biased stretch (pro residues) spans 49–60 (VPPPPPLPPPPR). The peptidase C39-like stretch occupies residues 121-241 (SLIQEGPQCG…WAVSAGVLLG (121 aa)). Cysteine 129 is a catalytic residue. Residue serine 313 is modified to Phosphoserine.

The protein belongs to the ACTMAP family. As to quaternary structure, interacts (via N-terminus) with PFN2; the interaction may facilitate efficient cleavage of the acetylated N-terminus of immature actin. Interacts with PFN1.

The protein localises to the cytoplasm. The catalysed reaction is N-terminal N(alpha)-acetyl-L-methionyl-L-aspartyl-[protein] + H2O = N-terminal L-aspartyl-[protein] + N-acetyl-L-methionine. It carries out the reaction N-terminal N(alpha)-acetyl-L-methionyl-L-glutamyl-[protein] + H2O = N-terminal L-glutamyl-[protein] + N-acetyl-L-methionine. It catalyses the reaction N-terminal N(alpha)-acetyl-L-cysteinyl-L-aspartyl-[protein] + H2O = N-terminal L-aspartyl-[protein] + N-acetyl-L-cysteine. The enzyme catalyses N-terminal N(alpha)-acetyl-L-cysteinyl-L-glutamyl-[protein] + H2O = N-terminal L-glutamyl-[protein] + N-acetyl-L-cysteine. Actin maturation protease that specifically mediates the cleavage of immature acetylated N-terminal actin, thereby contributing to actin maturation. Cleaves N-terminal acetylated methionine of immature cytoplasmic beta- and gamma-actins ACTB and ACTG1 after translation. Cleaves N-terminal acetylated cysteine of muscle alpha-actins ACTA1, ACTC1 and ACTA2 after canonical removal of N-terminal methionine. This chain is Actin maturation protease, found in Bos taurus (Bovine).